The primary structure comprises 191 residues: Elongation factor P (191 aa).

This sequence belongs to the elongation factor P family.

It localises to the cytoplasm. It participates in protein biosynthesis; polypeptide chain elongation. Involved in peptide bond synthesis. Stimulates efficient translation and peptide-bond synthesis on native or reconstituted 70S ribosomes in vitro. Probably functions indirectly by altering the affinity of the ribosome for aminoacyl-tRNA, thus increasing their reactivity as acceptors for peptidyl transferase. This is Elongation factor P from Bartonella tribocorum (strain CIP 105476 / IBS 506).